The following is a 302-amino-acid chain: Dihydroorotate dehydrogenase B (NAD(+)), catalytic subunit (302 aa).

Residues serine 23 and 47-48 contribute to the FMN site; that span reads KG. Substrate-binding positions include lysine 47 and 71 to 75; that span reads NSVGL. FMN-binding residues include asparagine 101 and asparagine 128. Residue asparagine 128 participates in substrate binding. Cysteine 131 serves as the catalytic Nucleophile. FMN is bound by residues lysine 166 and isoleucine 192. 193-194 contributes to the substrate binding site; that stretch reads NT. FMN contacts are provided by residues glycine 218, 244 to 245, and 266 to 267; these read GG and GT.

Belongs to the dihydroorotate dehydrogenase family. Type 1 subfamily. Heterotetramer of 2 PyrK and 2 PyrD type B subunits. The cofactor is FMN.

It localises to the cytoplasm. The enzyme catalyses (S)-dihydroorotate + NAD(+) = orotate + NADH + H(+). The protein operates within pyrimidine metabolism; UMP biosynthesis via de novo pathway; orotate from (S)-dihydroorotate (NAD(+) route): step 1/1. Catalyzes the conversion of dihydroorotate to orotate with NAD(+) as electron acceptor. This chain is Dihydroorotate dehydrogenase B (NAD(+)), catalytic subunit (pyrD), found in Alkaliphilus metalliredigens (strain QYMF).